Consider the following 175-residue polypeptide: ATP synthase subunit b (175 aa).

The helical transmembrane segment at 22 to 44 threads the bilayer; sequence MLVQLFFFLILLALLKKFAWGPL.

This sequence belongs to the ATPase B chain family. As to quaternary structure, F-type ATPases have 2 components, F(1) - the catalytic core - and F(0) - the membrane proton channel. F(1) has five subunits: alpha(3), beta(3), gamma(1), delta(1), epsilon(1). F(0) has three main subunits: a(1), b(2) and c(10-14). The alpha and beta chains form an alternating ring which encloses part of the gamma chain. F(1) is attached to F(0) by a central stalk formed by the gamma and epsilon chains, while a peripheral stalk is formed by the delta and b chains.

The protein localises to the cell membrane. Functionally, f(1)F(0) ATP synthase produces ATP from ADP in the presence of a proton or sodium gradient. F-type ATPases consist of two structural domains, F(1) containing the extramembraneous catalytic core and F(0) containing the membrane proton channel, linked together by a central stalk and a peripheral stalk. During catalysis, ATP synthesis in the catalytic domain of F(1) is coupled via a rotary mechanism of the central stalk subunits to proton translocation. In terms of biological role, component of the F(0) channel, it forms part of the peripheral stalk, linking F(1) to F(0). The sequence is that of ATP synthase subunit b from Oceanobacillus iheyensis (strain DSM 14371 / CIP 107618 / JCM 11309 / KCTC 3954 / HTE831).